Reading from the N-terminus, the 279-residue chain is Diaminopimelate epimerase (279 aa).

Residues Asn-14 and Gln-68 each contribute to the substrate site. The active-site Proton donor is the Cys-77. Substrate is bound by residues 78–79 (GN), Asn-191, and 207–208 (ER). Catalysis depends on Cys-217, which acts as the Proton acceptor. 218 to 219 (GT) contributes to the substrate binding site.

This sequence belongs to the diaminopimelate epimerase family. As to quaternary structure, homodimer.

It is found in the cytoplasm. The enzyme catalyses (2S,6S)-2,6-diaminopimelate = meso-2,6-diaminopimelate. It functions in the pathway amino-acid biosynthesis; L-lysine biosynthesis via DAP pathway; DL-2,6-diaminopimelate from LL-2,6-diaminopimelate: step 1/1. Functionally, catalyzes the stereoinversion of LL-2,6-diaminopimelate (L,L-DAP) to meso-diaminopimelate (meso-DAP), a precursor of L-lysine. The protein is Diaminopimelate epimerase of Methanothrix thermoacetophila (strain DSM 6194 / JCM 14653 / NBRC 101360 / PT) (Methanosaeta thermophila).